Reading from the N-terminus, the 347-residue chain is NADH-ubiquinone oxidoreductase chain 2 (347 aa).

The next 11 helical transmembrane spans lie at 2-22 (SPYV…MTLI), 25-45 (HWLT…PLMT), 56-76 (AIKY…SAIF), 96-116 (FMMT…FWVP), 122-142 (IPLL…ISIF), 149-169 (LNMS…GWGG), 178-197 (ILAY…IMIY), 202-219 (ILNL…FMVL), 241-261 (MIII…TGFM), 278-298 (LAMM…RIIY), and 323-343 (ILPI…TPMF).

The protein belongs to the complex I subunit 2 family. Core subunit of respiratory chain NADH dehydrogenase (Complex I) which is composed of 45 different subunits. Interacts with TMEM242.

The protein resides in the mitochondrion inner membrane. The catalysed reaction is a ubiquinone + NADH + 5 H(+)(in) = a ubiquinol + NAD(+) + 4 H(+)(out). In terms of biological role, core subunit of the mitochondrial membrane respiratory chain NADH dehydrogenase (Complex I) which catalyzes electron transfer from NADH through the respiratory chain, using ubiquinone as an electron acceptor. Essential for the catalytic activity and assembly of complex I. In Metachirus nudicaudatus (Brown four-eyed opossum), this protein is NADH-ubiquinone oxidoreductase chain 2.